The sequence spans 230 residues: uncharacterized protein (230 aa).

It to E.coli HemX N-terminal region.

This is an uncharacterized protein from Haemophilus influenzae (strain ATCC 51907 / DSM 11121 / KW20 / Rd).